The following is a 305-amino-acid chain: Nitrogen assimilation regulatory protein nac (305 aa).

The 58-residue stretch at methionine 1–threonine 58 folds into the HTH lysR-type domain. Positions leucine 18–alanine 37 form a DNA-binding region, H-T-H motif.

Belongs to the LysR transcriptional regulatory family.

Transcriptional activator for the hut, put and ure operons and repressor for the gdh and gltB operons in response to nitrogen limitation. Negative regulator of its own expression. The chain is Nitrogen assimilation regulatory protein nac (nac) from Escherichia coli (strain K12).